The chain runs to 318 residues: Mitochondrial coenzyme A transporter SLC25A42 (318 aa).

Solcar repeat units follow at residues 31–117 (RQVL…YKRI), 129–214 (LPPW…LKSL), and 224–312 (PYPF…MQIL). Transmembrane regions (helical) follow at residues 33–53 (VLSS…AVAP), 89–109 (LWRG…IQFS), 135–155 (LLAG…LDLV), 186–206 (LYFG…LSFF), 230–250 (MVFG…LDVV), and 293–313 (LKGP…QILL).

Belongs to the mitochondrial carrier (TC 2.A.29) family. In terms of tissue distribution, widely expressed. Highly expressed in adipose, followed by hypothalamus and brain coronal sections containing corpus callosum, fornix, thalamus, hypothalamus, optic chiasm, pons, midbrain, and cerebellum.

Its subcellular location is the mitochondrion inner membrane. It catalyses the reaction ADP(out) + CoA(in) = ADP(in) + CoA(out). The enzyme catalyses 3'-dephospho-CoA(in) + ADP(out) = 3'-dephospho-CoA(out) + ADP(in). It carries out the reaction adenosine 3',5'-bisphosphate(in) + ADP(out) = adenosine 3',5'-bisphosphate(out) + ADP(in). The catalysed reaction is AMP(in) + ADP(out) = AMP(out) + ADP(in). It catalyses the reaction dADP(in) + ADP(out) = dADP(out) + ADP(in). The enzyme catalyses ADP(in) + ATP(out) = ADP(out) + ATP(in). Mitochondrial carrier mediating the transport of coenzyme A (CoA) in mitochondria in exchange for intramitochondrial (deoxy)adenine nucleotides and adenosine 3',5'-diphosphate. In Rattus norvegicus (Rat), this protein is Mitochondrial coenzyme A transporter SLC25A42 (Slc25a42).